Reading from the N-terminus, the 447-residue chain is NAD-dependent histone deacetylase HST3 (447 aa).

The tract at residues 1-21 (MTSVSPSPPASRSGSMCSDLP) is disordered. One can recognise a Deacetylase sirtuin-type domain in the interval 35–363 (LDADDEVLRR…IKKLRQLKRE (329 aa)). NAD(+) contacts are provided by residues 60–79 (GAGI…DGLY) and 151–154 (QNID). His187 functions as the Proton acceptor in the catalytic mechanism. Residues Cys195, Cys198, Cys220, and Cys223 each contribute to the Zn(2+) site. NAD(+) is bound by residues 282 to 284 (GTS), 312 to 314 (NKT), and Cys333. Basic and acidic residues predominate over residues 365-375 (SDLRKQMKAQK). Disordered stretches follow at residues 365–393 (SDLR…QGID) and 411–447 (KRKI…NQAS).

Belongs to the sirtuin family. Class I subfamily. Zn(2+) serves as cofactor.

Its subcellular location is the cytoplasm. It is found in the nucleus. The enzyme catalyses N(6)-acetyl-L-lysyl-[protein] + NAD(+) + H2O = 2''-O-acetyl-ADP-D-ribose + nicotinamide + L-lysyl-[protein]. In terms of biological role, NAD-dependent histone deacetylase, which contributes together with HST4 to histone H3 'Lys-56' deacetylation, regulation of telomeric silencing, proper cell cycle progression, DNA damage control, DNA recombination, and genomic maintenance. This is NAD-dependent histone deacetylase HST3 (HST3) from Saccharomyces cerevisiae (strain ATCC 204508 / S288c) (Baker's yeast).